The chain runs to 111 residues: Probable 4-amino-4-deoxy-L-arabinose-phosphoundecaprenol flippase subunit ArnE (111 aa).

Residues 1–35 (MIWLTLVFASLLSVAGQLCQKQATCFATVNKRRKH) are Cytoplasmic-facing. The helical transmembrane segment at 36-56 (IVLWLGLALACLGLAMVLWLL) threads the bilayer. Positions 40 to 109 (LGLALACLGL…IIGGIVILGS (70 aa)) constitute an EamA domain. Residues 57 to 60 (VLQN) lie on the Periplasmic side of the membrane. Residues 61 to 81 (VPVGIAYPMLSLNFVWVTLAA) traverse the membrane as a helical segment. At 82 to 87 (VKLWHE) the chain is on the cytoplasmic side. The helical transmembrane segment at 88–108 (PVSLRHWCGVAFIIGGIVILG) threads the bilayer. At 109-111 (STV) the chain is on the periplasmic side.

Belongs to the ArnE family. As to quaternary structure, heterodimer of ArnE and ArnF.

The protein localises to the cell inner membrane. Its pathway is bacterial outer membrane biogenesis; lipopolysaccharide biosynthesis. Functionally, translocates 4-amino-4-deoxy-L-arabinose-phosphoundecaprenol (alpha-L-Ara4N-phosphoundecaprenol) from the cytoplasmic to the periplasmic side of the inner membrane. The polypeptide is Probable 4-amino-4-deoxy-L-arabinose-phosphoundecaprenol flippase subunit ArnE (Escherichia coli O6:H1 (strain CFT073 / ATCC 700928 / UPEC)).